The chain runs to 339 residues: Transcription initiation factor IIB (339 aa).

The TFIIB-type zinc finger occupies 39–70; it reads EELICPVCGSKNIIKDYERAEIVCEMCGCVLQ. C43, C46, C62, and C65 together coordinate Zn(2+). 2 tandem repeats follow at residues 156–239 and 250–331.

It belongs to the TFIIB family.

Functionally, stabilizes TBP binding to an archaeal box-A promoter. Also responsible for recruiting RNA polymerase II to the pre-initiation complex (DNA-TBP-TFIIB). This Methanococcus maripaludis (strain C6 / ATCC BAA-1332) protein is Transcription initiation factor IIB.